The sequence spans 118 residues: MARAAATQLVLVAMVAAMLLVATDAAISCGQVSSALSPCISYARGNGAKPPVACCSGVKRLAGAAQSTADKQAACRCLKSLATSIKGINMGKVSGVPGKCGVSVPFPISMSTDCNKVH.

The first 25 residues, 1 to 25, serve as a signal peptide directing secretion; it reads MARAAATQLVLVAMVAAMLLVATDA. 4 cysteine pairs are disulfide-bonded: cysteine 29-cysteine 77, cysteine 39-cysteine 54, cysteine 55-cysteine 100, and cysteine 75-cysteine 114.

Belongs to the plant LTP family.

Its function is as follows. Plant non-specific lipid-transfer proteins transfer phospholipids as well as galactolipids across membranes. May play a role in wax or cutin deposition in the cell walls of expanding epidermal cells and certain secretory tissues. This is Non-specific lipid-transfer protein 3 (LTP3) from Hordeum vulgare (Barley).